Here is a 173-residue protein sequence, read N- to C-terminus: Ribosome maturation factor RimM (173 aa).

One can recognise a PRC barrel domain in the interval Pro95–Leu169.

It belongs to the RimM family. Binds ribosomal protein uS19.

The protein localises to the cytoplasm. Functionally, an accessory protein needed during the final step in the assembly of 30S ribosomal subunit, possibly for assembly of the head region. Essential for efficient processing of 16S rRNA. May be needed both before and after RbfA during the maturation of 16S rRNA. It has affinity for free ribosomal 30S subunits but not for 70S ribosomes. This chain is Ribosome maturation factor RimM, found in Mycolicibacterium smegmatis (strain ATCC 700084 / mc(2)155) (Mycobacterium smegmatis).